The primary structure comprises 2253 residues: Genome polyprotein (2253 aa).

Cys-627 and Cys-694 are oxidised to a cystine. The short motif at 750 to 752 (RVD) is the Cell attachment site element. The LRAT domain maps to 825–920 (LVYKNRGFYK…LFPGRKEITQ (96 aa)). Active-site for protein 2A H-NC residues include His-835 and His-846. Cys-904 acts as the For protein 2A H-NC; Acyl-thioester intermediate in catalysis. A helical transmembrane segment spans residues 1002-1022 (IVLYCHAPNMLTTMCLGTLLV). The SF3 helicase domain maps to 1205-1366 (YSEMMRVNVR…ASYSRNNKLD (162 aa)). Tyr-1559 carries the post-translational modification O-(5'-phospho-RNA)-tyrosine. The Peptidase C3 domain maps to 1586-1775 (APYMQDLEHC…RAAAVHFISN (190 aa)). Residues His-1626, Asp-1664, and Cys-1739 each act as for protease 3C activity in the active site. The active-site Acyl-thioester intermediate is Cys-1970. The region spanning 2018–2132 (PYNYGLDYSS…SVSSPLDAEY (115 aa)) is the RdRp catalytic domain. Residues Asp-2024 and Asp-2118 each coordinate Mg(2+).

It belongs to the picornaviruses polyprotein family. Interacts with capsid protein VP1 and capsid protein VP3 to form heterotrimeric protomers. Five protomers subsequently associate to form pentamers which serve as building blocks for the capsid. As to quaternary structure, interacts with capsid protein VP0, and capsid protein VP3 to form heterotrimeric protomers. Five protomers subsequently associate to form pentamers which serve as building blocks for the capsid. In terms of assembly, interacts with capsid protein VP0 and capsid protein VP1 to form heterotrimeric protomers. Five protomers subsequently associate to form pentamers which serve as building blocks for the capsid. Homohexamer; forms a hexameric ring structure with 6-fold symmetry characteristic of AAA+ ATPases. As to quaternary structure, homodimer. Interacts with host ACBD3. In terms of assembly, interacts with RNA-directed RNA polymerase. Interacts with Viral protein genome-linked. Mg(2+) serves as cofactor. Post-translationally, VPg is uridylylated by the polymerase and is covalently linked to the 5'-end of genomic RNA. This uridylylated form acts as a nucleotide-peptide primer for the polymerase. In terms of processing, specific enzymatic cleavages yield mature proteins. All cleavages are catalyzed by P3C.

It localises to the virion. It is found in the host cytoplasm. The protein resides in the host nucleus. Its subcellular location is the host nucleolus. The protein localises to the host cytoplasmic vesicle membrane. It localises to the host endoplasmic reticulum membrane. It is found in the host Golgi apparatus membrane. It carries out the reaction RNA(n) + a ribonucleoside 5'-triphosphate = RNA(n+1) + diphosphate. The catalysed reaction is a ribonucleoside 5'-triphosphate + H2O = a ribonucleoside 5'-diphosphate + phosphate + H(+). It catalyses the reaction Selective cleavage of Gln-|-Gly bond in the poliovirus polyprotein. In other picornavirus reactions Glu may be substituted for Gln, and Ser or Thr for Gly.. Functionally, forms an icosahedral capsid of pseudo T=3 symmetry together with capsid proteins VP1 and VP3. The capsid is 300 Angstroms in diameter, composed of 60 copies of each capsid protein and enclosing the viral positive strand RNA genome. The attachment to the host cell receptor induces virion internalization predominantly through clathrin-mediated endocytosis. Binds packaging signals present in the viral RNA. Its function is as follows. Forms an icosahedral capsid of pseudo T=3 symmetry together with capsid proteins VP0 and VP1. The capsid is 300 Angstroms in diameter, composed of 60 copies of each capsid protein and enclosing the viral positive strand RNA genome. The attachment to the host cell receptor induces virion internalization predominantly through clathrin-mediated endocytosis. Binds packaging signals present in the viral RNA. In terms of biological role, forms an icosahedral capsid of pseudo T=3 symmetry together with capsid proteins VP0 and VP3. The capsid is 300 Angstroms in diameter, composed of 60 copies of each capsid protein and enclosing the viral positive strand RNA genome. The attachment to the host cell receptor induces virion internalization predominantly through clathrin-mediated endocytosis. Binds packaging signals present in the viral RNA. Mediates self-processing of the polyprotein by a translational effect termed 'ribosome skipping'. Mechanistically, 2A1-mediated cleavage occurs between the C-terminal glycine and the proline of the downstream protein 2A2. Functionally, plays an essential role in the virus replication cycle by acting as a viroporin. Creates a pore in the host endoplasmic reticulum and as a consequence releases Ca2+ in the cytoplasm of infected cell. In turn, high levels of cytoplasmic calcium may trigger membrane trafficking and transport of viral ER-associated proteins to viroplasms, sites of viral genome replication. Its function is as follows. Induces and associates with structural rearrangements of intracellular membranes. Displays RNA-binding, nucleotide binding and NTPase activities. May play a role in virion morphogenesis and viral RNA encapsidation by interacting with the capsid protein VP3. In terms of biological role, localizes the viral replication complex to the surface of membranous vesicles. It inhibits host cell endoplasmic reticulum-to-Golgi apparatus transport and causes the disassembly of the Golgi complex, possibly through GBF1 interaction. This would result in depletion of MHC, trail receptors and IFN receptors at the host cell surface. Plays an essential role in viral RNA replication by recruiting ACBD3 and PI4KB at the viral replication sites, thereby allowing the formation of the rearranged membranous structures where viral replication takes place. Acts as a primer for viral RNA replication and remains covalently bound to viral genomic RNA. VPg is uridylylated prior to priming replication into VPg-pUpU. The VPg-pUpU is then used as primer on the genomic RNA poly(A) by the RNA-dependent RNA polymerase to replicate the viral genome. Following genome release from the infecting virion in the cytoplasm, the VPg-RNA linkage is probably removed by host TDP2. During the late stage of the replication cycle, host TDP2 is excluded from sites of viral RNA synthesis and encapsidation, allowing for the generation of progeny virions. Functionally, cysteine protease that generates mature viral proteins from the precursor polyprotein. In addition to its proteolytic activity, it binds to viral RNA, and thus influences viral genome replication. RNA and substrate bind cooperatively to the protease. Its function is as follows. Replicates the viral genomic RNA on the surface of intracellular membranes. Covalently attaches UMP to a tyrosine of VPg, which is used to prime RNA synthesis. The positive stranded RNA genome is first replicated at virus induced membranous vesicles, creating a dsRNA genomic replication form. This dsRNA is then used as template to synthesize positive stranded RNA genomes. ss(+)RNA genomes are either translated, replicated or encapsidated. This Ljunganvirus 1 (LV) protein is Genome polyprotein.